The chain runs to 177 residues: ATP synthase subunit delta (177 aa).

Belongs to the ATPase delta chain family. F-type ATPases have 2 components, F(1) - the catalytic core - and F(0) - the membrane proton channel. F(1) has five subunits: alpha(3), beta(3), gamma(1), delta(1), epsilon(1). F(0) has three main subunits: a(1), b(2) and c(10-14). The alpha and beta chains form an alternating ring which encloses part of the gamma chain. F(1) is attached to F(0) by a central stalk formed by the gamma and epsilon chains, while a peripheral stalk is formed by the delta and b chains.

Its subcellular location is the cell inner membrane. In terms of biological role, f(1)F(0) ATP synthase produces ATP from ADP in the presence of a proton or sodium gradient. F-type ATPases consist of two structural domains, F(1) containing the extramembraneous catalytic core and F(0) containing the membrane proton channel, linked together by a central stalk and a peripheral stalk. During catalysis, ATP synthesis in the catalytic domain of F(1) is coupled via a rotary mechanism of the central stalk subunits to proton translocation. Its function is as follows. This protein is part of the stalk that links CF(0) to CF(1). It either transmits conformational changes from CF(0) to CF(1) or is implicated in proton conduction. The chain is ATP synthase subunit delta from Yersinia pseudotuberculosis serotype O:1b (strain IP 31758).